We begin with the raw amino-acid sequence, 185 residues long: Large ribosomal subunit protein uL5 (185 aa).

It belongs to the universal ribosomal protein uL5 family. As to quaternary structure, part of the 50S ribosomal subunit; part of the 5S rRNA/L5/L18/L25 subcomplex. Contacts the 5S rRNA and the P site tRNA. Forms a bridge to the 30S subunit in the 70S ribosome.

Functionally, this is one of the proteins that bind and probably mediate the attachment of the 5S RNA into the large ribosomal subunit, where it forms part of the central protuberance. In the 70S ribosome it contacts protein S13 of the 30S subunit (bridge B1b), connecting the 2 subunits; this bridge is implicated in subunit movement. Contacts the P site tRNA; the 5S rRNA and some of its associated proteins might help stabilize positioning of ribosome-bound tRNAs. This is Large ribosomal subunit protein uL5 from Nitrobacter hamburgensis (strain DSM 10229 / NCIMB 13809 / X14).